A 319-amino-acid chain; its full sequence is Mitochondrial thiamine pyrophosphate carrier 1 (319 aa).

3 Solcar repeats span residues 12-110, 121-207, and 214-309; these read GQRY…VTQS, PQPA…VRVP, and PFGS…VLKI. 6 helical membrane passes run 17–35, 91–107, 127–147, 182–201, 221–237, and 284–301; these read VVAAGAIAGMVSRFCVAPL, LLYIFYGAIQFTTYRTV, FVSGATAGGIGTFTTYPFDLL, GVSAAVAQIVPYMGLFFATY, TAGVIASVIAKTGVFPL, and GLTVSLIKAAPASAVTMW.

This sequence belongs to the mitochondrial carrier (TC 2.A.29) family.

It is found in the mitochondrion inner membrane. Mitochondrial transporter that mediates uptake of thiamine pyrophosphate (ThPP) into mitochondria. This is Mitochondrial thiamine pyrophosphate carrier 1 (TPC1) from Coccidioides immitis (strain RS) (Valley fever fungus).